A 399-amino-acid polypeptide reads, in one-letter code: Guanine nucleotide-binding protein negative regulator 1 (399 aa).

WD repeat units follow at residues 44 to 83 (KPLN…LSKK), 105 to 145 (YSYS…NKAS), 150 to 194 (DHQE…VMTT), 207 to 247 (SLKG…PCQL), 252 to 292 (ERGN…DMVY), and 296 to 337 (GHRG…EETH).

In terms of assembly, interacts with gpa1.

The protein localises to the cytoplasm. Its function is as follows. Negatively regulates the pheromone-response pathway. Acts as a structural mimic of the G protein beta subunit thereby interacting with gpa1 which then inhibits gpa1 signaling. This is Guanine nucleotide-binding protein negative regulator 1 (gnr1) from Schizosaccharomyces pombe (strain 972 / ATCC 24843) (Fission yeast).